A 318-amino-acid polypeptide reads, in one-letter code: Extracellular metalloprotease AO090012001025 (318 aa).

Positions 1 to 23 are cleaved as a signal peptide; that stretch reads MSHFPTLHILILVIANLQIQCFA. N-linked (GlcNAc...) asparagine glycosylation is found at Asn106, Asn121, and Asn193. His229 serves as a coordination point for Zn(2+). The active site involves Glu230. A Zn(2+)-binding site is contributed by His233. A disulfide bridge connects residues Cys268 and Cys295.

This sequence belongs to the peptidase M43B family.

The protein localises to the secreted. Secreted metalloproteinase that allows assimilation of proteinaceous substrates. In Aspergillus oryzae (strain ATCC 42149 / RIB 40) (Yellow koji mold), this protein is Extracellular metalloprotease AO090012001025.